A 323-amino-acid chain; its full sequence is D-alanine--D-alanine ligase (323 aa).

In terms of domain architecture, ATP-grasp spans 105-305 (KQQLVPRGIP…YEDLVEAIVE (201 aa)). Residue 131 to 188 (PLARPYVLKPVNEGSSVGVAIVTDESNYGNPIRRDAPGPWQEFRELLAEPFIRGRELT) coordinates ATP. Mg(2+) contacts are provided by D256, E272, and N274.

Belongs to the D-alanine--D-alanine ligase family. Mg(2+) serves as cofactor. Mn(2+) is required as a cofactor.

The protein resides in the cytoplasm. It carries out the reaction 2 D-alanine + ATP = D-alanyl-D-alanine + ADP + phosphate + H(+). The protein operates within cell wall biogenesis; peptidoglycan biosynthesis. Cell wall formation. In Erythrobacter litoralis (strain HTCC2594), this protein is D-alanine--D-alanine ligase.